A 148-amino-acid chain; its full sequence is MKVYLLQDLPGTGKKGQIVDVAEGYARNYLFKNNLAILADEKLIEQVKKREEREQRKEEERYQKALDLKKELEGKAVVVKAPGGETGKLYGAVTTRQIAHALKEQLKLEVDSKDINMPDPIKSVGVYDVDIHLFKDVWATVKVKVEKE.

It belongs to the bacterial ribosomal protein bL9 family.

In terms of biological role, binds to the 23S rRNA. The polypeptide is Large ribosomal subunit protein bL9 (Coprothermobacter proteolyticus (strain ATCC 35245 / DSM 5265 / OCM 4 / BT)).